The primary structure comprises 321 residues: Probable membrane-associated kinase regulator 3 (321 aa).

A compositionally biased stretch (polar residues) spans 297-314 (KSNVTESELCSSRTSVST). Residues 297-321 (KSNVTESELCSSRTSVSTCGDLDKD) are disordered.

The protein localises to the cell membrane. The sequence is that of Probable membrane-associated kinase regulator 3 (MAKR3) from Arabidopsis thaliana (Mouse-ear cress).